Reading from the N-terminus, the 106-residue chain is Iron-sulfur cluster assembly protein CyaY (106 aa).

Belongs to the frataxin family.

In terms of biological role, involved in iron-sulfur (Fe-S) cluster assembly. May act as a regulator of Fe-S biogenesis. This chain is Iron-sulfur cluster assembly protein CyaY, found in Photorhabdus laumondii subsp. laumondii (strain DSM 15139 / CIP 105565 / TT01) (Photorhabdus luminescens subsp. laumondii).